The following is a 93-amino-acid chain: Aspartyl/glutamyl-tRNA(Asn/Gln) amidotransferase subunit C (93 aa).

The protein belongs to the GatC family. Heterotrimer of A, B and C subunits.

The enzyme catalyses L-glutamyl-tRNA(Gln) + L-glutamine + ATP + H2O = L-glutaminyl-tRNA(Gln) + L-glutamate + ADP + phosphate + H(+). The catalysed reaction is L-aspartyl-tRNA(Asn) + L-glutamine + ATP + H2O = L-asparaginyl-tRNA(Asn) + L-glutamate + ADP + phosphate + 2 H(+). In terms of biological role, allows the formation of correctly charged Asn-tRNA(Asn) or Gln-tRNA(Gln) through the transamidation of misacylated Asp-tRNA(Asn) or Glu-tRNA(Gln) in organisms which lack either or both of asparaginyl-tRNA or glutaminyl-tRNA synthetases. The reaction takes place in the presence of glutamine and ATP through an activated phospho-Asp-tRNA(Asn) or phospho-Glu-tRNA(Gln). This is Aspartyl/glutamyl-tRNA(Asn/Gln) amidotransferase subunit C from Methanocella arvoryzae (strain DSM 22066 / NBRC 105507 / MRE50).